The following is a 279-amino-acid chain: Undecaprenyl-diphosphatase (279 aa).

Helical transmembrane passes span 1–21 (MVLE…LPIS), 39–59 (GRFF…LYFF), 96–116 (LLLV…VRFV), 128–148 (FTMG…DALF), 155–175 (IFQI…FAII), 201–221 (FSFL…LVAG), 231–251 (YSLI…SALL), and 259–279 (FVLF…VSFF).

This sequence belongs to the UppP family.

It localises to the cell membrane. It catalyses the reaction di-trans,octa-cis-undecaprenyl diphosphate + H2O = di-trans,octa-cis-undecaprenyl phosphate + phosphate + H(+). Catalyzes the dephosphorylation of undecaprenyl diphosphate (UPP). Confers resistance to bacitracin. This is Undecaprenyl-diphosphatase from Tropheryma whipplei (strain Twist) (Whipple's bacillus).